Consider the following 643-residue polypeptide: Phosphatidylinositol-3,5-bisphosphate 3-phosphatase MTMR2 (643 aa).

2 stretches are compositionally biased toward polar residues: residues 1-12 and 23-40; these read MEKSSSCESLGS and DSLS…VHTK. The tract at residues 1 to 56 is disordered; that stretch reads MEKSSSCESLGSQPAAARPPSVDSLSSASTSHSENSVHTKSASVVSSDSISTSADN. Ser6 and Ser9 each carry phosphoserine. The span at 41–55 shows a compositional bias: low complexity; it reads SASVVSSDSISTSAD. Ser58 carries the post-translational modification Phosphoserine. The region spanning 68 to 139 is the GRAM domain; sequence NKLAEMEEPP…GVINRVEKIG (72 aa). The 376-residue stretch at 205–580 folds into the Myotubularin phosphatase domain; it reads GWKLYDPLLE…RHLELWVGYY (376 aa). Residues Asn330, Asn355, and Ile356 each contribute to the a 1,2-diacyl-sn-glycero-3-phospho-(1D-myo-inositol-3,5-bisphosphate) site. Residues Asn330, Asn355, and Ile356 each coordinate a 1,2-diacyl-sn-glycero-3-phospho-(1D-myo-inositol-3-phosphate). Cys417 functions as the Phosphocysteine intermediate in the catalytic mechanism. The a 1,2-diacyl-sn-glycero-3-phospho-(1D-myo-inositol-3,5-bisphosphate) site is built by Ser418, Asp419, Gly420, Trp421, Asp422, Arg423, Arg459, and Arg463. The a 1,2-diacyl-sn-glycero-3-phospho-(1D-myo-inositol-3-phosphate) site is built by Ser418, Asp419, Gly420, Trp421, Asp422, and Arg423. An a 1,2-diacyl-sn-glycero-3-phospho-(1D-myo-inositol-3-phosphate)-binding site is contributed by Arg463. The stretch at 593 to 627 forms a coiled coil; it reads IHNRYKELLAKRAELQKKVEELQREISNRSTSSSE. The segment at 615 to 643 is disordered; sequence QREISNRSTSSSERASSPAQCVTPVQTVV. Over residues 620–631 the composition is skewed to low complexity; the sequence is NRSTSSSERASS. Residues 632–643 are compositionally biased toward polar residues; the sequence is PAQCVTPVQTVV.

The protein belongs to the protein-tyrosine phosphatase family. Non-receptor class myotubularin subfamily. As to quaternary structure, homodimer (via coiled-coil domain). Heterotetramer consisting of one MTMR2 dimer and one SBF2/MTMR13 dimer; specifically in peripheral nerves stabilizes SBF2/MTMR13 at the membranes and increases MTMR2 catalytic activity towards phosphatidylinositol 3,5-bisphosphate and to a lesser extent towards phosphatidylinositol 3-phosphate. Heterodimer with SBF1/MTMR5; acts as an adapter for the phosphatase MTMR2 to regulate MTMR2 catalytic activity and subcellular location. Heterodimer with MTMR12. Post-translationally, phosphorylation at Ser-58 decreases MTMR2 localization to endocytic vesicular structures.

The protein resides in the cytoplasm. It localises to the early endosome membrane. The protein localises to the perinuclear region. It is found in the cell projection. Its subcellular location is the axon. The protein resides in the endosome membrane. The catalysed reaction is a 1,2-diacyl-sn-glycero-3-phospho-(1D-myo-inositol-3,5-bisphosphate) + H2O = a 1,2-diacyl-sn-glycero-3-phospho-(1D-myo-inositol-5-phosphate) + phosphate. It carries out the reaction a 1,2-diacyl-sn-glycero-3-phospho-(1D-myo-inositol-3-phosphate) + H2O = a 1,2-diacyl-sn-glycero-3-phospho-(1D-myo-inositol) + phosphate. The enzyme catalyses 1,2-dioctanoyl-sn-glycero-3-phospho-(1-D-myo-inositol-3-phosphate) + H2O = 1,2-dioctanoyl-sn-glycero-3-phospho-(1D-myo-inositol) + phosphate. It catalyses the reaction 1,2-dioctanoyl-sn-glycero-3-phospho-(1D-myo-inositol-3,5-bisphosphate) + H2O = 1,2-dioctanoyl-sn-glycero-3-phospho-(1D-myo-inositol-5-phosphate) + phosphate. In terms of biological role, lipid phosphatase that specifically dephosphorylates the D-3 position of phosphatidylinositol 3-phosphate and phosphatidylinositol 3,5-bisphosphate, generating phosphatidylinositol and phosphatidylinositol 5-phosphate. Regulates the level of these phosphoinositides critical for various biological processes including autophagy initiation and autophagosome maturation. The polypeptide is Phosphatidylinositol-3,5-bisphosphate 3-phosphatase MTMR2 (Pongo abelii (Sumatran orangutan)).